The primary structure comprises 486 residues: Ribulose bisphosphate carboxylase large chain, chromosomal (486 aa).

Substrate contacts are provided by asparagine 126 and threonine 176. Lysine 178 (proton acceptor) is an active-site residue. Lysine 180 lines the substrate pocket. Mg(2+)-binding residues include lysine 204, aspartate 206, and glutamate 207. Lysine 204 is modified (N6-carboxylysine). The Proton acceptor role is filled by histidine 296. The substrate site is built by arginine 297, histidine 329, and serine 381.

It belongs to the RuBisCO large chain family. Type I subfamily. Heterohexadecamer of 8 large chains and 8 small chains; disulfide-linked. The disulfide link is formed within the large subunit homodimers. Requires Mg(2+) as cofactor. The disulfide bond which can form between Cys-278 in the large chain dimeric partners within the hexadecamer appears to be associated with oxidative stress and protein turnover.

The enzyme catalyses 2 (2R)-3-phosphoglycerate + 2 H(+) = D-ribulose 1,5-bisphosphate + CO2 + H2O. It catalyses the reaction D-ribulose 1,5-bisphosphate + O2 = 2-phosphoglycolate + (2R)-3-phosphoglycerate + 2 H(+). Its function is as follows. RuBisCO catalyzes two reactions: the carboxylation of D-ribulose 1,5-bisphosphate, the primary event in carbon dioxide fixation, as well as the oxidative fragmentation of the pentose substrate. Both reactions occur simultaneously and in competition at the same active site. The protein is Ribulose bisphosphate carboxylase large chain, chromosomal (cbbL1) of Cupriavidus necator (strain ATCC 17699 / DSM 428 / KCTC 22496 / NCIMB 10442 / H16 / Stanier 337) (Ralstonia eutropha).